Consider the following 536-residue polypeptide: UDP-N-acetylmuramate--L-alanine ligase (536 aa).

Gly133–Thr139 contributes to the ATP binding site.

This sequence belongs to the MurCDEF family.

It is found in the cytoplasm. It carries out the reaction UDP-N-acetyl-alpha-D-muramate + L-alanine + ATP = UDP-N-acetyl-alpha-D-muramoyl-L-alanine + ADP + phosphate + H(+). Its pathway is cell wall biogenesis; peptidoglycan biosynthesis. In terms of biological role, cell wall formation. This is UDP-N-acetylmuramate--L-alanine ligase from Wolbachia sp. subsp. Brugia malayi (strain TRS).